Reading from the N-terminus, the 698-residue chain is Polyribonucleotide nucleotidyltransferase (698 aa).

2 residues coordinate Mg(2+): Asp486 and Asp492. A KH domain is found at 553-612 (PRIIVRNIPKDRIGELIGPGGKNVRGISELTGAELYIEDDGKVTISGSNQESAEKAAKMV). Positions 622 to 690 (GKIYEGKVKR…KTGKIDLSRK (69 aa)) constitute an S1 motif domain.

This sequence belongs to the polyribonucleotide nucleotidyltransferase family. The cofactor is Mg(2+).

It localises to the cytoplasm. It catalyses the reaction RNA(n+1) + phosphate = RNA(n) + a ribonucleoside 5'-diphosphate. In terms of biological role, involved in mRNA degradation. Catalyzes the phosphorolysis of single-stranded polyribonucleotides processively in the 3'- to 5'-direction. This Leptospira interrogans serogroup Icterohaemorrhagiae serovar copenhageni (strain Fiocruz L1-130) protein is Polyribonucleotide nucleotidyltransferase.